The following is a 99-amino-acid chain: uncharacterized protein (99 aa).

An N-terminal signal peptide occupies residues 1-17 (MMMNAFFPAMALMVLVG). Cysteine 18 carries N-palmitoyl cysteine lipidation. Cysteine 18 carries S-diacylglycerol cysteine lipidation.

Its subcellular location is the cell membrane. This is an uncharacterized protein from Shigella boydii serotype 4 (strain Sb227).